Consider the following 254-residue polypeptide: UPF0246 protein FTF1693c (254 aa).

The protein belongs to the UPF0246 family.

This is UPF0246 protein FTF1693c from Francisella tularensis subsp. tularensis (strain FSC 198).